The chain runs to 504 residues: MVAPGSVGSRLGAVFPFLLVLVDLQYEGAECGVNADVEKHLELGKKLLAAGQLADALSQFHAAVDGDPDNYIAYYRRATVFLAMGKSKAALPDLTKVIALKMDFTAARLQRGHLLLKQGKLDEAEDDFKKVLKSNPSEQEEKEAESQLVKADEMQRLRSQALDAFDGADYTAAITFLDKILEVCVWDAELRELRAECFIKEGEPRKAISDLKAASKLKSDNTEAFYKISTLYYQLGDHELSLSEVRECLKLDQDHKRCFAHYKQVKKLNKLIESAEELIRDGRYTDATSKYESVMKTEPSVAEYTVRSKERICHCFSKDEKPVEAIRICSEVLQMEPDNVNALKDRAEAYLIEEMYDEAIQDYEAAQEHNENDQQIREGLEKAQRLLKQSQKRDYYKILGVKRNAKKQEIIKAYRKLALQWHPDNFQNEEEKKKAEKKFIDIAAAKEVLSDPEMRKKFDDGEDPLDAESQQGGGGNPFHRSWNSWQGFNPFSSGGPFRFKFHFN.

Positions 1-31 are cleaved as a signal peptide; the sequence is MVAPGSVGSRLGAVFPFLLVLVDLQYEGAEC. TPR repeat units follow at residues 37–70, 72–104, 105–138, 154–187, 188–221, 222–255, 268–301, 306–339, and 340–373; these read VEKH…DPDN, IAYY…KMDF, TAAR…NPSE, MQRL…CVWD, AELR…KSDN, TEAF…DQDH, LNKL…EPSV, VRSK…EPDN, and VNAL…NEND. The cysteines at positions 248 and 258 are disulfide-linked. Phosphoserine is present on S274. C313 and C329 are oxidised to a cystine. Residues 375–393 form a flexible linker region; that stretch reads QIREGLEKAQRLLKQSQKR. The 69-residue stretch at 394 to 462 folds into the J domain; sequence DYYKILGVKR…EMRKKFDDGE (69 aa). The disordered stretch occupies residues 451-481; the sequence is DPEMRKKFDDGEDPLDAESQQGGGGNPFHRS.

Interacts with EIF2AK4/GCN2; this interaction occurs under endoplasmic reticulum (ER) stress, hypothermic and amino acid starving stress conditions and inhibits EIF2AK4/GCN2 kinase activity. Interacts with EIF2AK3. Interacts with EIF2AK2. Forms a trimeric complex with DNAJB1 and HSPA8. Interacts with THAP12. Widely expressed, with high level in the liver.

It is found in the endoplasmic reticulum. Involved in the unfolded protein response (UPR) during endoplasmic reticulum (ER) stress. Acts as a negative regulator of the EIF2AK4/GCN2 kinase activity by preventing the phosphorylation of eIF-2-alpha at 'Ser-52' and hence attenuating general protein synthesis under ER stress, hypothermic and amino acid starving stress conditions. Co-chaperone of HSPA8/HSC70, it stimulates its ATPase activity. May inhibit both the autophosphorylation of EIF2AK2/PKR and the ability of EIF2AK2 to catalyze phosphorylation of the EIF2A. May inhibit EIF2AK3/PERK activity. The sequence is that of DnaJ homolog subfamily C member 3 (Dnajc3) from Mus musculus (Mouse).